The primary structure comprises 248 residues: Coproheme decarboxylase (248 aa).

Residues Arg-130, 144–148, His-171, Gln-184, and Ser-222 contribute to the Fe-coproporphyrin III site; that span reads YPMDK. The active site involves Tyr-144.

It belongs to the ChdC family. Type 1 subfamily. Fe-coproporphyrin III is required as a cofactor.

The catalysed reaction is Fe-coproporphyrin III + 2 H2O2 + 2 H(+) = heme b + 2 CO2 + 4 H2O. It catalyses the reaction Fe-coproporphyrin III + H2O2 + H(+) = harderoheme III + CO2 + 2 H2O. It carries out the reaction harderoheme III + H2O2 + H(+) = heme b + CO2 + 2 H2O. It functions in the pathway porphyrin-containing compound metabolism; protoheme biosynthesis. Functionally, involved in coproporphyrin-dependent heme b biosynthesis. Catalyzes the decarboxylation of Fe-coproporphyrin III (coproheme) to heme b (protoheme IX), the last step of the pathway. The reaction occurs in a stepwise manner with a three-propionate intermediate. This is Coproheme decarboxylase from Geobacillus sp. (strain WCH70).